The following is a 482-amino-acid chain: Guanine nucleotide exchange factor SRM1 (482 aa).

Residues 1-11 are compositionally biased toward polar residues; it reads MVKRTVATNGD. Positions 1-22 are disordered; sequence MVKRTVATNGDASGAHRAKKMS. A Nuclear localization signal motif is present at residues 15 to 26; sequence AHRAKKMSKTHA. 7 RCC1 repeats span residues 45 to 101, 103 to 152, 183 to 238, 239 to 291, 292 to 347, 349 to 411, and 412 to 466; these read PLDI…ALDE, SNVW…TPAK, NGEV…FLDE, EGMV…ALTK, DNKL…ILSQ, GDLY…AVAQ, and NGIA…SGGV. A disordered region spans residues 128–158; sequence KDMDADDSSDDEDGDLNELESTPAKIPRESF. The span at 131–145 shows a compositional bias: acidic residues; the sequence is DADDSSDDEDGDLNE. 2 positions are modified to phosphoserine: Ser-135 and Ser-136.

In terms of assembly, component of a multicomponent complex composed of six to seven proteins, which has a collective molecular mass greater than 150 kDa. Interacts with GSP1 and YRB2. Phosphorylated; possibly by KSP1.

Its subcellular location is the nucleus. Functionally, guanine nucleotide exchange factor that promotes the exchange of GSP1/GSP2-bound GDP by GTP and controls RNA metabolism and transport. Involved in yeast pheromone response pathway and in mRNA metabolism. Involved in nuclear pore complex (NPC) assembly and required for mRNA and ribosome nuclear export. Binds chromatin and is involved NPC-mediated transcriptional control. This chain is Guanine nucleotide exchange factor SRM1 (SRM1), found in Saccharomyces cerevisiae (strain ATCC 204508 / S288c) (Baker's yeast).